The sequence spans 303 residues: Glycine--tRNA ligase alpha subunit (303 aa).

The protein belongs to the class-II aminoacyl-tRNA synthetase family. In terms of assembly, tetramer of two alpha and two beta subunits.

The protein localises to the cytoplasm. It carries out the reaction tRNA(Gly) + glycine + ATP = glycyl-tRNA(Gly) + AMP + diphosphate. The sequence is that of Glycine--tRNA ligase alpha subunit from Klebsiella pneumoniae subsp. pneumoniae (strain ATCC 700721 / MGH 78578).